Reading from the N-terminus, the 551-residue chain is Probable alpha-glucosidase (551 aa).

Aspartate 212 serves as the catalytic Nucleophile. The active-site Proton donor is the glutamate 272.

Belongs to the glycosyl hydrolase 13 family.

The catalysed reaction is Hydrolysis of terminal, non-reducing (1-&gt;4)-linked alpha-D-glucose residues with release of alpha-D-glucose.. The sequence is that of Probable alpha-glucosidase (aglA) from Rhizobium meliloti (strain 1021) (Ensifer meliloti).